We begin with the raw amino-acid sequence, 461 residues long: D-arabinono-1,4-lactone oxidase (461 aa).

One can recognise an FAD-binding PCMH-type domain in the interval F24–A194. A Pros-8alpha-FAD histidine modification is found at H61.

This sequence belongs to the oxygen-dependent FAD-linked oxidoreductase family. FAD is required as a cofactor.

The protein resides in the mitochondrion membrane. It catalyses the reaction D-arabinono-1,4-lactone + O2 = dehydro-D-arabinono-1,4-lactone + H2O2 + H(+). The protein operates within cofactor biosynthesis; D-erythroascorbate biosynthesis; dehydro-D-arabinono-1,4-lactone from D-arabinose: step 2/2. The chain is D-arabinono-1,4-lactone oxidase (alo1) from Schizosaccharomyces pombe (strain 972 / ATCC 24843) (Fission yeast).